Here is a 447-residue protein sequence, read N- to C-terminus: Probable ribosomal RNA small subunit methyltransferase B (447 aa).

S-adenosyl-L-methionine is bound by residues 259–265, aspartate 283, aspartate 310, and aspartate 329; that span reads CAAPGGK. Catalysis depends on cysteine 382, which acts as the Nucleophile.

The protein belongs to the class I-like SAM-binding methyltransferase superfamily. RsmB/NOP family.

Its subcellular location is the cytoplasm. The catalysed reaction is cytidine(967) in 16S rRNA + S-adenosyl-L-methionine = 5-methylcytidine(967) in 16S rRNA + S-adenosyl-L-homocysteine + H(+). In terms of biological role, specifically methylates the cytosine at position 967 (m5C967) of 16S rRNA. The chain is Probable ribosomal RNA small subunit methyltransferase B from Bacillus subtilis (strain 168).